The chain runs to 1033 residues: MGKENYELYSVELGTGPGGDMAAKMSKKKAGGGGGKKKEKLENMKKEMEMNDHQLSVSELEQKYQTSATKGLKASLAAELLLRDGPNALRPPRGTPEYVKFARQLAGGLQCLMWVAAAICLIAFAIQASEGDLTTDDNLYLALALIAVVVVTGCFGYYQEFKSTNIIASFKNLVPQQATVIRDGDKFQINADQLVVGDLVEMKGGDRVPADIRILSAQGCKVDNSSLTGESEPQTRSPECTHESPLETRNIAFFSTMCLEGTAQGLVVSTGDRTIIGRIASLASGVENEKTPIAIEIEHFVDIIAGLAILFGATFFVVAMCIGYTFLRAMVFFMAIVVAYVPEGLLATVTVCLSLTAKRLASKNCVVKNLEAVETLGSTSVICSDKTGTLTQNRMTVSHLWFDNHIHTADTTEDQSGQTFDQSSETWRALCRVLTLCNRAAFKSGQDAVPVPKRIVIGDASETALLKFSELTLGNAMGYRDRFPKVCEIPFNSTNKFQLSIHTLEDPRDPRHLLVMKGAPERVLERCSSILIKGQELPLDEQWREAFQTAYLSLGGLGERVLGFCQLYLNEKDYPPGYTFDVEAMNFPSSGLCFAGLVSMIDPPRATVPDAVLKCRTAGIRVIMVTGDHPITAKAIAASVGIISEGSETVEDIAARLRMPVDQVNKKDARACVINGMQLKDMDPSELVEALRTHPEMVFARTSPQQKLVIVESCQRLGAIVAVTGDGVNDSPALKKADIGVAMGIAGSDAAKNAADMILLDDNFASIVTGVEQGRLIFDNLKKSIAYTLTKNIPELTPYLIYITVSVPLPLGCITILFIELCTDIFPSVSLAYEKAESDIMHLRPRNPRRDRLVNEPLAAYSYFQIGAIQSFAGFADYFTAMAQEGWFPLLCVGLRPQWEDHHLQDLQDSYGQEWTFGQRLYQQYTCYTVFFISIEMCQIADVLIRKTRRLSAFQQGFFRNRILVIAIVFQVCIGCFLCYCPGMPNIFNFMPIRFQWWLVPMPFGLLIFVYDEIRKLGVRCCPGSWWDQELYY.

The Cytoplasmic segment spans residues 1 to 96 (MGKENYELYS…NALRPPRGTP (96 aa)). Residues Tyr-6 and Tyr-9 each carry the phosphotyrosine modification. The disordered stretch occupies residues 14 to 39 (GTGPGGDMAAKMSKKKAGGGGGKKKE). Residues 25–38 (MSKKKAGGGGGKKK) show a composition bias toward basic residues. Position 26 is a phosphoserine (Ser-26). The chain crosses the membrane as a helical span at residues 97-117 (EYVKFARQLAGGLQCLMWVAA). Over 118 to 140 (AICLIAFAIQASEGDLTTDDNLY) the chain is Lumenal. A helical membrane pass occupies residues 141 to 161 (LALALIAVVVVTGCFGYYQEF). Over 162–297 (KSTNIIASFK…NEKTPIAIEI (136 aa)) the chain is Cytoplasmic. A helical transmembrane segment spans residues 298–317 (EHFVDIIAGLAILFGATFFV). At 318-329 (VAMCIGYTFLRA) the chain is on the lumenal side. A helical transmembrane segment spans residues 330-347 (MVFFMAIVVAYVPEGLLA). Residues Val-338, Ala-339, Val-341, and Glu-343 each coordinate K(+). At 348-781 (TVTVCLSLTA…EQGRLIFDNL (434 aa)) the chain is on the cytoplasmic side. Asp-385 acts as the 4-aspartylphosphate intermediate in catalysis. Asp-385 and Thr-387 together coordinate Mg(2+). Phosphoserine is present on residues Ser-461 and Ser-599. Mg(2+) contacts are provided by Asp-726 and Asp-730. A helical membrane pass occupies residues 782–801 (KKSIAYTLTKNIPELTPYLI). Glu-795 is a binding site for K(+). Over 802–811 (YITVSVPLPL) the chain is Lumenal. Residues 812-832 (GCITILFIELCTDIFPSVSLA) traverse the membrane as a helical segment. Glu-820 provides a ligand contact to K(+). The Cytoplasmic segment spans residues 833 to 852 (YEKAESDIMHLRPRNPRRDR). Ser-838 is subject to Phosphoserine. Residues 853–875 (LVNEPLAAYSYFQIGAIQSFAGF) traverse the membrane as a helical segment. Over 876–927 (ADYFTAMAQEGWFPLLCVGLRPQWEDHHLQDLQDSYGQEWTFGQRLYQQYTC) the chain is Lumenal. Residues 928 to 947 (YTVFFISIEMCQIADVLIRK) traverse the membrane as a helical segment. Residues 948 to 961 (TRRLSAFQQGFFRN) lie on the Cytoplasmic side of the membrane. A Phosphoserine; by PKA modification is found at Ser-952. Residues 962 to 980 (RILVIAIVFQVCIGCFLCY) form a helical membrane-spanning segment. Topologically, residues 981 to 995 (CPGMPNIFNFMPIRF) are lumenal. A helical membrane pass occupies residues 996 to 1016 (QWWLVPMPFGLLIFVYDEIRK). The Cytoplasmic segment spans residues 1017–1033 (LGVRCCPGSWWDQELYY).

Belongs to the cation transport ATPase (P-type) (TC 3.A.3) family. Type IIC subfamily. In terms of assembly, the gastric H(+)/K(+) ATPase pump is composed of the catalytic alpha subunit ATP4A and the regulatory beta subunit ATP4B. Interacts (via the P-domain) with ATP4B (via N-terminus); this interaction stabilizes the lumenal-open E2 conformation state and prevents the reverse reaction of the transport cycle.

The protein localises to the apical cell membrane. It carries out the reaction K(+)(out) + ATP + H2O + H(+)(in) = K(+)(in) + ADP + phosphate + 2 H(+)(out). Its function is as follows. The catalytic subunit of the gastric H(+)/K(+) ATPase pump which transports H(+) ions in exchange for K(+) ions across the apical membrane of parietal cells. Uses ATP as an energy source to pump H(+) ions to the gastric lumen while transporting K(+) ion from the lumen into the cell. Remarkably generates a million-fold proton gradient across the gastric parietal cell membrane, acidifying the gastric juice down to pH 1. Within a transport cycle, the transfer of a H(+) ion across the membrane is coupled to ATP hydrolysis and is associated with a transient phosphorylation that shifts the pump conformation from inward-facing (E1) to outward-facing state (E2). The release of the H(+) ion in the stomach lumen is followed by binding of K(+) ion converting the pump conformation back to the E1 state. The sequence is that of Potassium-transporting ATPase alpha chain 1 (Atp4a) from Rattus norvegicus (Rat).